The primary structure comprises 158 residues: Cyclic pyranopterin monophosphate synthase (158 aa).

Residues 76 to 78 (LCH) and 114 to 115 (ME) each bind substrate. The active site involves Asp129.

It belongs to the MoaC family. In terms of assembly, homohexamer; trimer of dimers.

It carries out the reaction (8S)-3',8-cyclo-7,8-dihydroguanosine 5'-triphosphate = cyclic pyranopterin phosphate + diphosphate. It functions in the pathway cofactor biosynthesis; molybdopterin biosynthesis. Functionally, catalyzes the conversion of (8S)-3',8-cyclo-7,8-dihydroguanosine 5'-triphosphate to cyclic pyranopterin monophosphate (cPMP). This Shewanella sediminis (strain HAW-EB3) protein is Cyclic pyranopterin monophosphate synthase.